Reading from the N-terminus, the 1041-residue chain is Serine-repeat antigen protein 6 (1041 aa).

An N-terminal signal peptide occupies residues 1–34; that stretch reads MIFFNFKLNRMICPIFFLYIINVLFTQYFIKCEG. N-linked (GlcNAc...) asparagine glycosylation is present at asparagine 84. Over residues 101-111 the composition is skewed to low complexity; that stretch reads KVVSSSESGKG. The segment at 101–173 is disordered; that stretch reads KVVSSSESGK…TESSSETLNK (73 aa). The span at 114–149 shows a compositional bias: polar residues; it reads VSHTKVTSEGLSDTQPNVTQSVSSSTHTPGSLDSTM. An N-linked (GlcNAc...) asparagine glycan is attached at asparagine 130. Over residues 150–168 the composition is skewed to low complexity; the sequence is STEQHSSVSQSSLPTESSS. N-linked (GlcNAc...) asparagine glycosylation occurs at asparagine 459. A disordered region spans residues 500 to 577; the sequence is TLPSESPSES…GDTNYVYDFD (78 aa). The segment covering 502–515 has biased composition (low complexity); sequence PSESPSESSSKSDS. Positions 521–545 are enriched in basic and acidic residues; that stretch reads NDKDKNEDKDDMSKNSKEEFKNDDK. A glycan (N-linked (GlcNAc...) asparagine) is linked at asparagine 554. A compositionally biased stretch (low complexity) spans 564–574; it reads NINNGDTNYVY. N-linked (GlcNAc...) asparagine glycosylation occurs at asparagine 583. Cysteine 654 is an active-site residue. An N-linked (GlcNAc...) asparagine glycan is attached at asparagine 684. Active-site residues include histidine 820 and asparagine 845. The N-linked (GlcNAc...) asparagine glycan is linked to asparagine 984.

The protein belongs to the peptidase C1 family. Just prior to merozoite egress from host erythrocytes, proteolytically cleaved by SUB1 to generate the active 75kDa form.

It localises to the parasitophorous vacuole lumen. The protein resides in the parasitophorous vacuole membrane. Functionally, cysteine protease which plays an essential role in merozoite egress from host erythrocytes. May cleave host SPTB/beta spectrin and ANK1/ankyrin-1 which disrupts host erythrocyte actin cytoskeleton and leads to host erythrocyte cell membrane rupture. The sequence is that of Serine-repeat antigen protein 6 from Plasmodium falciparum.